Here is a 200-residue protein sequence, read N- to C-terminus: Late embryogenesis abundant protein 19 (200 aa).

Disordered stretches follow at residues Met-1–Ser-145 and Thr-172–His-200. 5 stretches are compositionally biased toward basic and acidic residues: residues Gly-13–Ala-23, Ser-30–Ser-42, Gln-53–Thr-81, Ala-88–Asp-97, and Glu-105–Ala-114. The stretch at Gly-52–Thr-81 forms a coiled coil. 2 stretches are compositionally biased toward low complexity: residues Ala-115–Gln-130 and Thr-186–His-200.

The protein belongs to the LEA type 4 family.

In terms of biological role, involved in response to stress. The sequence is that of Late embryogenesis abundant protein 19 from Oryza sativa subsp. japonica (Rice).